Reading from the N-terminus, the 197-residue chain is Putative NADH dehydrogenase/NAD(P)H nitroreductase Plav_3612 (197 aa).

This sequence belongs to the nitroreductase family. HadB/RutE subfamily. It depends on FMN as a cofactor.

The sequence is that of Putative NADH dehydrogenase/NAD(P)H nitroreductase Plav_3612 from Parvibaculum lavamentivorans (strain DS-1 / DSM 13023 / NCIMB 13966).